The primary structure comprises 452 residues: D-inositol 3-phosphate glycosyltransferase (452 aa).

A 1D-myo-inositol 3-phosphate-binding site is contributed by His-25. Residues 31 to 32 (QP) and Gly-39 contribute to the UDP-N-acetyl-alpha-D-glucosamine site. 1D-myo-inositol 3-phosphate contacts are provided by residues 36 to 41 (DAGGMN), Lys-94, Tyr-127, Thr-151, and Arg-171. Positions 245, 250, and 309 each coordinate UDP-N-acetyl-alpha-D-glucosamine. Residues Tyr-318, Arg-319, and Ser-321 each coordinate Mg(2+). Residues Glu-331 and Glu-339 each coordinate UDP-N-acetyl-alpha-D-glucosamine. Thr-345 contacts Mg(2+).

This sequence belongs to the glycosyltransferase group 1 family. MshA subfamily. As to quaternary structure, homodimer.

It catalyses the reaction 1D-myo-inositol 3-phosphate + UDP-N-acetyl-alpha-D-glucosamine = 1D-myo-inositol 2-acetamido-2-deoxy-alpha-D-glucopyranoside 3-phosphate + UDP + H(+). Its function is as follows. Catalyzes the transfer of a N-acetyl-glucosamine moiety to 1D-myo-inositol 3-phosphate to produce 1D-myo-inositol 2-acetamido-2-deoxy-glucopyranoside 3-phosphate in the mycothiol biosynthesis pathway. The chain is D-inositol 3-phosphate glycosyltransferase from Rhodococcus jostii (strain RHA1).